The sequence spans 178 residues: Nucleoside-triphosphatase THEP1 (178 aa).

Residues 9-16 and 101-108 contribute to the ATP site; these read GPVGSIKA and VIIIDEVG.

The protein belongs to the THEP1 NTPase family.

The enzyme catalyses a ribonucleoside 5'-triphosphate + H2O = a ribonucleoside 5'-diphosphate + phosphate + H(+). Its function is as follows. Has nucleotide phosphatase activity towards ATP, GTP, CTP, TTP and UTP. May hydrolyze nucleoside diphosphates with lower efficiency. The sequence is that of Nucleoside-triphosphatase THEP1 from Thermoplasma volcanium (strain ATCC 51530 / DSM 4299 / JCM 9571 / NBRC 15438 / GSS1).